Consider the following 278-residue polypeptide: tRNA (guanine-N(7)-)-methyltransferase (278 aa).

S-adenosyl-L-methionine is bound by residues Gly63, 86-87, 119-120, and Leu139; these read EL and NA. Asp142 is a catalytic residue. Position 217–219 (217–219) interacts with S-adenosyl-L-methionine; the sequence is TEE. The disordered stretch occupies residues 259 to 278; that stretch reads IDSTTTTTTSTATITEVESK. Positions 261 to 278 are enriched in low complexity; the sequence is STTTTTTSTATITEVESK.

The protein belongs to the class I-like SAM-binding methyltransferase superfamily. TrmB family.

It localises to the nucleus. The enzyme catalyses guanosine(46) in tRNA + S-adenosyl-L-methionine = N(7)-methylguanosine(46) in tRNA + S-adenosyl-L-homocysteine. Its pathway is tRNA modification; N(7)-methylguanine-tRNA biosynthesis. Catalyzes the formation of N(7)-methylguanine at position 46 (m7G46) in tRNA. The chain is tRNA (guanine-N(7)-)-methyltransferase (mettl1) from Dictyostelium discoideum (Social amoeba).